The chain runs to 357 residues: 3-isopropylmalate dehydrogenase (357 aa).

Substrate-binding residues include arginine 99, arginine 109, arginine 133, and aspartate 223. Mg(2+)-binding residues include aspartate 223, aspartate 247, and aspartate 251. 283–295 provides a ligand contact to NAD(+); that stretch reads GSAPDIAGEQRAD.

The protein belongs to the isocitrate and isopropylmalate dehydrogenases family. LeuB type 2 subfamily. In terms of assembly, homodimer. The cofactor is Mg(2+). It depends on Mn(2+) as a cofactor.

It is found in the cytoplasm. The catalysed reaction is (2R,3S)-3-isopropylmalate + NAD(+) = 4-methyl-2-oxopentanoate + CO2 + NADH. It functions in the pathway amino-acid biosynthesis; L-leucine biosynthesis; L-leucine from 3-methyl-2-oxobutanoate: step 3/4. Functionally, catalyzes the oxidation of 3-carboxy-2-hydroxy-4-methylpentanoate (3-isopropylmalate) to 3-carboxy-4-methyl-2-oxopentanoate. The product decarboxylates to 4-methyl-2 oxopentanoate. This Leifsonia xyli subsp. xyli (strain CTCB07) protein is 3-isopropylmalate dehydrogenase.